The chain runs to 369 residues: Phospho-N-acetylmuramoyl-pentapeptide-transferase (369 aa).

Helical transmembrane passes span 3-23, 53-73, 81-101, 118-138, 162-182, 198-218, 240-260, 267-287, 290-310, and 347-367; these read ALLG…PLFI, GGIV…LLTW, VTPS…VGFL, WQKI…AITL, FMAL…CLIV, LAAG…FWQF, PLDL…FLWW, IFMG…LAIL, TELL…SVVL, and FWII…LEWI.

This sequence belongs to the glycosyltransferase 4 family. MraY subfamily. Requires Mg(2+) as cofactor.

It localises to the cell membrane. It carries out the reaction UDP-N-acetyl-alpha-D-muramoyl-L-alanyl-gamma-D-glutamyl-meso-2,6-diaminopimeloyl-D-alanyl-D-alanine + di-trans,octa-cis-undecaprenyl phosphate = di-trans,octa-cis-undecaprenyl diphospho-N-acetyl-alpha-D-muramoyl-L-alanyl-D-glutamyl-meso-2,6-diaminopimeloyl-D-alanyl-D-alanine + UMP. It functions in the pathway cell wall biogenesis; peptidoglycan biosynthesis. Catalyzes the initial step of the lipid cycle reactions in the biosynthesis of the cell wall peptidoglycan: transfers peptidoglycan precursor phospho-MurNAc-pentapeptide from UDP-MurNAc-pentapeptide onto the lipid carrier undecaprenyl phosphate, yielding undecaprenyl-pyrophosphoryl-MurNAc-pentapeptide, known as lipid I. The polypeptide is Phospho-N-acetylmuramoyl-pentapeptide-transferase (Clavibacter sepedonicus (Clavibacter michiganensis subsp. sepedonicus)).